Reading from the N-terminus, the 429-residue chain is Adenylosuccinate synthetase (429 aa).

GTP contacts are provided by residues 12–18 and 40–42; these read GDEGKGK and GHT. D13 (proton acceptor) is an active-site residue. Mg(2+)-binding residues include D13 and G40. Residues 13 to 16, 38 to 41, T128, R142, Q223, T238, and R302 contribute to the IMP site; these read DEGK and NAGH. H41 acts as the Proton donor in catalysis. Substrate is bound at residue 298 to 304; sequence VNTGRPR. Residues R304, 330 to 332, and 412 to 414 contribute to the GTP site; these read KLD and GVG.

This sequence belongs to the adenylosuccinate synthetase family. Homodimer. Mg(2+) is required as a cofactor.

The protein resides in the cytoplasm. The enzyme catalyses IMP + L-aspartate + GTP = N(6)-(1,2-dicarboxyethyl)-AMP + GDP + phosphate + 2 H(+). The protein operates within purine metabolism; AMP biosynthesis via de novo pathway; AMP from IMP: step 1/2. Functionally, plays an important role in the de novo pathway of purine nucleotide biosynthesis. Catalyzes the first committed step in the biosynthesis of AMP from IMP. The polypeptide is Adenylosuccinate synthetase (Corynebacterium urealyticum (strain ATCC 43042 / DSM 7109)).